The chain runs to 95 residues: Toxin HigB-1 (95 aa).

Toxic component of a type II toxin-antitoxin (TA) system. Inhibits translation by cleavage of mRNA. The chain is Toxin HigB-1 (higB-1) from Vibrio cholerae serotype O1 (strain ATCC 39315 / El Tor Inaba N16961).